A 606-amino-acid chain; its full sequence is tRNA 5-methylaminomethyl-2-thiouridine biosynthesis bifunctional protein MnmC (606 aa).

Residues Met-1 to Leu-237 are tRNA (mnm(5)s(2)U34)-methyltransferase. The segment at Ile-254–Gly-606 is FAD-dependent cmnm(5)s(2)U34 oxidoreductase.

The protein in the N-terminal section; belongs to the methyltransferase superfamily. tRNA (mnm(5)s(2)U34)-methyltransferase family. It in the C-terminal section; belongs to the DAO family. It depends on FAD as a cofactor.

Its subcellular location is the cytoplasm. It carries out the reaction 5-aminomethyl-2-thiouridine(34) in tRNA + S-adenosyl-L-methionine = 5-methylaminomethyl-2-thiouridine(34) in tRNA + S-adenosyl-L-homocysteine + H(+). Functionally, catalyzes the last two steps in the biosynthesis of 5-methylaminomethyl-2-thiouridine (mnm(5)s(2)U) at the wobble position (U34) in tRNA. Catalyzes the FAD-dependent demodification of cmnm(5)s(2)U34 to nm(5)s(2)U34, followed by the transfer of a methyl group from S-adenosyl-L-methionine to nm(5)s(2)U34, to form mnm(5)s(2)U34. In Idiomarina loihiensis (strain ATCC BAA-735 / DSM 15497 / L2-TR), this protein is tRNA 5-methylaminomethyl-2-thiouridine biosynthesis bifunctional protein MnmC.